The sequence spans 208 residues: ATP-dependent Clp protease proteolytic subunit (208 aa).

Residue serine 111 is the Nucleophile of the active site. Histidine 136 is an active-site residue.

Belongs to the peptidase S14 family. As to quaternary structure, fourteen ClpP subunits assemble into 2 heptameric rings which stack back to back to give a disk-like structure with a central cavity, resembling the structure of eukaryotic proteasomes.

Its subcellular location is the cytoplasm. It carries out the reaction Hydrolysis of proteins to small peptides in the presence of ATP and magnesium. alpha-casein is the usual test substrate. In the absence of ATP, only oligopeptides shorter than five residues are hydrolyzed (such as succinyl-Leu-Tyr-|-NHMec, and Leu-Tyr-Leu-|-Tyr-Trp, in which cleavage of the -Tyr-|-Leu- and -Tyr-|-Trp bonds also occurs).. In terms of biological role, cleaves peptides in various proteins in a process that requires ATP hydrolysis. Has a chymotrypsin-like activity. Plays a major role in the degradation of misfolded proteins. In Vibrio campbellii (strain ATCC BAA-1116), this protein is ATP-dependent Clp protease proteolytic subunit.